We begin with the raw amino-acid sequence, 324 residues long: Fructose-1,6-bisphosphatase class 1 (324 aa).

Mg(2+) is bound by residues glutamate 88, aspartate 107, leucine 109, and aspartate 110. Substrate contacts are provided by residues aspartate 110–serine 113, asparagine 199, and lysine 265. Mg(2+) is bound at residue glutamate 271.

Belongs to the FBPase class 1 family. In terms of assembly, homotetramer. Mg(2+) is required as a cofactor.

The protein localises to the cytoplasm. The enzyme catalyses beta-D-fructose 1,6-bisphosphate + H2O = beta-D-fructose 6-phosphate + phosphate. Its pathway is carbohydrate biosynthesis; gluconeogenesis. The sequence is that of Fructose-1,6-bisphosphatase class 1 from Neisseria gonorrhoeae (strain ATCC 700825 / FA 1090).